A 344-amino-acid polypeptide reads, in one-letter code: Sulfate/thiosulfate import ATP-binding protein CysA (344 aa).

The region spanning 3-237 (IEVRNLVKKF…PATAFVHGFI (235 aa)) is the ABC transporter domain. 35–42 (GPSGSGKT) contacts ATP.

It belongs to the ABC transporter superfamily. Sulfate/tungstate importer (TC 3.A.1.6) family. As to quaternary structure, the complex is composed of two ATP-binding proteins (CysA), two transmembrane proteins (CysT and CysW) and a solute-binding protein (CysP).

The protein localises to the cell inner membrane. The catalysed reaction is sulfate(out) + ATP + H2O = sulfate(in) + ADP + phosphate + H(+). It catalyses the reaction thiosulfate(out) + ATP + H2O = thiosulfate(in) + ADP + phosphate + H(+). Part of the ABC transporter complex CysAWTP involved in sulfate/thiosulfate import. Responsible for energy coupling to the transport system. The protein is Sulfate/thiosulfate import ATP-binding protein CysA of Bradyrhizobium diazoefficiens (strain JCM 10833 / BCRC 13528 / IAM 13628 / NBRC 14792 / USDA 110).